The chain runs to 252 residues: Imidazole glycerol phosphate synthase subunit HisF (252 aa).

Residues D11 and D130 contribute to the active site.

Belongs to the HisA/HisF family. In terms of assembly, heterodimer of HisH and HisF.

It localises to the cytoplasm. The enzyme catalyses 5-[(5-phospho-1-deoxy-D-ribulos-1-ylimino)methylamino]-1-(5-phospho-beta-D-ribosyl)imidazole-4-carboxamide + L-glutamine = D-erythro-1-(imidazol-4-yl)glycerol 3-phosphate + 5-amino-1-(5-phospho-beta-D-ribosyl)imidazole-4-carboxamide + L-glutamate + H(+). The protein operates within amino-acid biosynthesis; L-histidine biosynthesis; L-histidine from 5-phospho-alpha-D-ribose 1-diphosphate: step 5/9. Functionally, IGPS catalyzes the conversion of PRFAR and glutamine to IGP, AICAR and glutamate. The HisF subunit catalyzes the cyclization activity that produces IGP and AICAR from PRFAR using the ammonia provided by the HisH subunit. The chain is Imidazole glycerol phosphate synthase subunit HisF from Desulforudis audaxviator (strain MP104C).